Reading from the N-terminus, the 530-residue chain is Ankyrin repeat domain-containing protein 53 (530 aa).

Positions 1–15 are enriched in low complexity; that stretch reads MASAGSTARRAGSGS. The interval 1–99 is disordered; sequence MASAGSTARR…PSPSKESDQT (99 aa). The segment covering 32 to 41 has biased composition (polar residues); that stretch reads PSGSMQQANK. ANK repeat units lie at residues 139–169, 173–206, and 210–239; these read KGFT…PVDL, NSQT…DLNA, and NGST…NVHA. Disordered regions lie at residues 323 to 360 and 383 to 402; these read GHSL…VDAR and PTMW…QISH. Polar residues-rich tracts occupy residues 326–341 and 386–402; these read LVSN…LSKT and WNVS…QISH.

In terms of assembly, interacts with PSRC1; recruited by PSRC1 to the spindle during mitosis. Post-translationally, phosphorylated during mitosis.

Its subcellular location is the cytoplasm. The protein resides in the cytoskeleton. The protein localises to the spindle. It localises to the spindle pole. Functionally, required for normal progression through mitosis. Involved in chromosome alignment and cytokinesis via regulation of microtubules polymerization. The chain is Ankyrin repeat domain-containing protein 53 (ANKRD53) from Homo sapiens (Human).